We begin with the raw amino-acid sequence, 91 residues long: Cell division protein FtsB (91 aa).

Over 1-3 (MKW) the chain is Cytoplasmic. The helical transmembrane segment at 4-21 (LVAVLVVFVAMFQYRLWV) threads the bilayer. Residues 22–91 (GEGSIADVVR…ETFFMIIDDQ (70 aa)) lie on the Periplasmic side of the membrane. The stretch at 23–63 (EGSIADVVRLEREIARQEADNERLRERNKQLAAEVDALKTG) forms a coiled coil.

It belongs to the FtsB family. In terms of assembly, part of a complex composed of FtsB, FtsL and FtsQ.

Its subcellular location is the cell inner membrane. Its function is as follows. Essential cell division protein. May link together the upstream cell division proteins, which are predominantly cytoplasmic, with the downstream cell division proteins, which are predominantly periplasmic. This Teredinibacter turnerae (strain ATCC 39867 / T7901) protein is Cell division protein FtsB.